The primary structure comprises 99 residues: Secreted RxLR effector protein 94 (99 aa).

The short motif at 35–55 (RQLRQSANPSKAWHQWKSETR) is the RxLR-dEER element.

This sequence belongs to the RxLR effector family.

Its subcellular location is the secreted. The protein localises to the host nucleus. The protein resides in the host cytoplasm. In terms of biological role, secreted effector that completely suppresses the host cell death induced by cell death-inducing proteins. The sequence is that of Secreted RxLR effector protein 94 from Plasmopara viticola (Downy mildew of grapevine).